Here is a 288-residue protein sequence, read N- to C-terminus: Eukaryotic translation initiation factor 3 subunit F-2 (288 aa).

Positions 12 to 149 constitute an MPN domain; the sequence is VLLHPLVLFQ…TRIFCAVATG (138 aa).

Belongs to the eIF-3 subunit F family. As to quaternary structure, component of the eukaryotic translation initiation factor 3 (eIF-3) complex. The eIF-3 complex interacts with pix.

It is found in the cytoplasm. Its function is as follows. Component of the eukaryotic translation initiation factor 3 (eIF-3) complex, which is involved in protein synthesis of a specialized repertoire of mRNAs and, together with other initiation factors, stimulates binding of mRNA and methionyl-tRNAi to the 40S ribosome. The eIF-3 complex specifically targets and initiates translation of a subset of mRNAs involved in cell proliferation. The polypeptide is Eukaryotic translation initiation factor 3 subunit F-2 (Drosophila pseudoobscura pseudoobscura (Fruit fly)).